Consider the following 90-residue polypeptide: Large ribosomal subunit protein bL27 (90 aa).

Positions 1–21 (MAHTKAGGTTRNSRDSAGRRL) are disordered.

The protein belongs to the bacterial ribosomal protein bL27 family.

This chain is Large ribosomal subunit protein bL27, found in Metamycoplasma arthritidis (strain 158L3-1) (Mycoplasma arthritidis).